The chain runs to 197 residues: Holliday junction branch migration complex subunit RuvA (197 aa).

The domain I stretch occupies residues 1 to 63 (MYAYLKGIIT…EDAHLLYGFR (63 aa)). The domain II stretch occupies residues 64 to 142 (SEDEKKLFLS…VAGDGLPAKV (79 aa)). Residues 143-147 (AVQAS) are flexible linker. A domain III region spans residues 148 to 197 (AENQELEEAMEAMLALGYKATELKKIKKFFEGTTDTAENYIKSALKMLVK).

It belongs to the RuvA family. As to quaternary structure, homotetramer. Forms an RuvA(8)-RuvB(12)-Holliday junction (HJ) complex. HJ DNA is sandwiched between 2 RuvA tetramers; dsDNA enters through RuvA and exits via RuvB. An RuvB hexamer assembles on each DNA strand where it exits the tetramer. Each RuvB hexamer is contacted by two RuvA subunits (via domain III) on 2 adjacent RuvB subunits; this complex drives branch migration. In the full resolvosome a probable DNA-RuvA(4)-RuvB(12)-RuvC(2) complex forms which resolves the HJ.

The protein localises to the cytoplasm. In terms of biological role, the RuvA-RuvB-RuvC complex processes Holliday junction (HJ) DNA during genetic recombination and DNA repair, while the RuvA-RuvB complex plays an important role in the rescue of blocked DNA replication forks via replication fork reversal (RFR). RuvA specifically binds to HJ cruciform DNA, conferring on it an open structure. The RuvB hexamer acts as an ATP-dependent pump, pulling dsDNA into and through the RuvAB complex. HJ branch migration allows RuvC to scan DNA until it finds its consensus sequence, where it cleaves and resolves the cruciform DNA. The chain is Holliday junction branch migration complex subunit RuvA from Streptococcus pneumoniae serotype 2 (strain D39 / NCTC 7466).